Consider the following 112-residue polypeptide: MKLLGIFLVASFAFVLSFGEEMIEGENPLEDQRAELTSCFPVGHECDGDASNCNCCGDDVYCGCGWGRWNCKCKVADQSYAYGICKDKVNCPNRHLWPAKVCKKPCRRNCGG.

The N-terminal stretch at 1-19 is a signal peptide; sequence MKLLGIFLVASFAFVLSFG. The propeptide occupies 20-33; the sequence is EEMIEGENPLEDQR. 7 cysteine pairs are disulfide-bonded: cysteine 39/cysteine 56, cysteine 46/cysteine 62, cysteine 53/cysteine 85, cysteine 55/cysteine 73, cysteine 64/cysteine 71, cysteine 91/cysteine 106, and cysteine 102/cysteine 110. Glycine 111 carries the post-translational modification Glycine amide.

Belongs to the neurotoxin 04 (omega-agtx) family. 02 (Tx1) subfamily. Contains 7 disulfide bonds. In terms of tissue distribution, expressed by the venom gland.

It localises to the secreted. Reversible inhibitor of neuronal sodium channels (Nav1.2/ SCN2A) that binds in proximity to site 1 and displays increasing affinity as the membrane potential is depolarized. Induces excitatory symptoms and spastic paralysis in mice. This is Mu-ctenitoxin-Pn1a from Phoneutria nigriventer (Brazilian armed spider).